The sequence spans 294 residues: Bidirectional sugar transporter SWEET13 (294 aa).

At 1 to 7 (MALTNNL) the chain is on the extracellular side. Residues 8–28 (WAFVFGILGNIISFVVFLAPV) traverse the membrane as a helical segment. The MtN3/slv 1 domain maps to 10-97 (FVFGILGNII…VLFVSYANKK (88 aa)). The Cytoplasmic portion of the chain corresponds to 29–42 (PTFVRICKKKSTEG). Residues 43–63 (FQSLPYVSALFSAMLWIYYAM) form a helical membrane-spanning segment. Over 64 to 69 (QKDGTA) the chain is Extracellular. The helical transmembrane segment at 70 to 90 (FLLITINAFGCVIETIYIVLF) threads the bilayer. The Cytoplasmic segment spans residues 91–104 (VSYANKKTRISTLK). A helical membrane pass occupies residues 105 to 125 (VLGLLNFLGFAAIVLVCELLT). Residues 126-132 (KGSTREK) are Extracellular-facing. A helical membrane pass occupies residues 133–153 (VLGGICVGFSVSVFAAPLSIM). The region spanning 133–216 (VLGGICVGFS…MILYIIFKYY (84 aa)) is the MtN3/slv 2 domain. Residues 154–166 (RVVVRTRSVEFMP) are Cytoplasmic-facing. A helical membrane pass occupies residues 167 to 187 (FSLSLFLTISAVTWLFYGLAI). The Extracellular segment spans residues 188 to 192 (KDFYV). Residues 193–213 (ALPNVLGAFLGAVQMILYIIF) form a helical membrane-spanning segment. The Cytoplasmic segment spans residues 214 to 294 (KYYKTPVAQK…NKDVQKQSQV (81 aa)). Residues 273-294 (KSQNMTDPKDQINKDVQKQSQV) form a disordered region. Residues 279–294 (DPKDQINKDVQKQSQV) are compositionally biased toward basic and acidic residues.

It belongs to the SWEET sugar transporter family. As to quaternary structure, forms heterooligomers with SWEET1, SWEET3, SWEET6, SWEET7, SWEET8, SWEET9, SWEET11 and SWEET17. In terms of tissue distribution, expressed at low levels in leaves.

It is found in the cell membrane. In terms of biological role, mediates both low-affinity uptake and efflux of sugar across the plasma membrane. Involved in nurturing the male gametophyte. The chain is Bidirectional sugar transporter SWEET13 from Arabidopsis thaliana (Mouse-ear cress).